The chain runs to 314 residues: Secreted frizzled-related protein 1 (314 aa).

The signal sequence occupies residues 1–31 (MGVGRSARGRGGAASGVLLALAAALLAAGSA). Positions 53–169 (TKPPQCVDIP…FPEGDVCIAM (117 aa)) constitute an FZ domain. Intrachain disulfides connect cysteine 58/cysteine 121, cysteine 68/cysteine 114, cysteine 105/cysteine 140, cysteine 129/cysteine 166, and cysteine 133/cysteine 157. The N-linked (GlcNAc...) asparagine glycan is linked to asparagine 173. Disulfide bonds link cysteine 186/cysteine 256, cysteine 189/cysteine 258, and cysteine 203/cysteine 306. The 121-residue stretch at 186–306 (CPPCDNELKS…FMKRMKNHEC (121 aa)) folds into the NTR domain.

It belongs to the secreted frizzled-related protein (sFRP) family. As to quaternary structure, interacts with WNT8, WNT1, WNT2, WNT4 and FRZD6. Interacts with MYOC. As to expression, highly expressed in kidney and embryonic heart. Also highly expressed in the eye, where it is principally localized to the ciliary body and the lens epithelium. Weaker expression in heart, lung and brain. In the brain, is expressed exclusively in the choroid plexus.

The protein resides in the secreted. In terms of biological role, soluble frizzled-related proteins (sFRPS) function as modulators of Wnt signaling through direct interaction with Wnts. They have a role in regulating cell growth and differentiation in specific cell types. SFRP1 decreases intracellular beta-catenin levels. Has antiproliferative effects on vascular cells, in vitro and in vivo, and can induce, in vivo, an angiogenic response. In vascular cell cycle, delays the G1 phase and entry into the S phase. In kidney development, inhibits tubule formation and bud growth in metanephroi. Inhibits WNT1/WNT4-mediated TCF-dependent transcription. The sequence is that of Secreted frizzled-related protein 1 from Mus musculus (Mouse).